A 184-amino-acid chain; its full sequence is Large ribosomal subunit protein uL6 (184 aa).

Belongs to the universal ribosomal protein uL6 family. As to quaternary structure, part of the 50S ribosomal subunit.

In terms of biological role, this protein binds to the 23S rRNA, and is important in its secondary structure. It is located near the subunit interface in the base of the L7/L12 stalk, and near the tRNA binding site of the peptidyltransferase center. In Pyrococcus abyssi (strain GE5 / Orsay), this protein is Large ribosomal subunit protein uL6.